We begin with the raw amino-acid sequence, 1378 residues long: DNA-directed RNA polymerase subunit beta (1378 aa).

This sequence belongs to the RNA polymerase beta chain family. The RNAP catalytic core consists of 2 alpha, 1 beta, 1 beta' and 1 omega subunit. When a sigma factor is associated with the core the holoenzyme is formed, which can initiate transcription.

It carries out the reaction RNA(n) + a ribonucleoside 5'-triphosphate = RNA(n+1) + diphosphate. Its function is as follows. DNA-dependent RNA polymerase catalyzes the transcription of DNA into RNA using the four ribonucleoside triphosphates as substrates. This Agrobacterium fabrum (strain C58 / ATCC 33970) (Agrobacterium tumefaciens (strain C58)) protein is DNA-directed RNA polymerase subunit beta.